The chain runs to 330 residues: uncharacterized protein (330 aa).

Belongs to the ornithine cyclodeaminase/mu-crystallin family.

Its subcellular location is the cytoplasm. This is an uncharacterized protein from Schizosaccharomyces pombe (strain 972 / ATCC 24843) (Fission yeast).